The chain runs to 122 residues: Large ribosomal subunit protein uL14c (122 aa).

It belongs to the universal ribosomal protein uL14 family. In terms of assembly, part of the 50S ribosomal subunit.

The protein resides in the plastid. It is found in the chloroplast. Its function is as follows. Binds to 23S rRNA. This Lemna minor (Common duckweed) protein is Large ribosomal subunit protein uL14c.